The sequence spans 197 residues: Lipoprotein signal peptidase (197 aa).

2 helical membrane-spanning segments follow: residues 73–93 (SNAI…YLMI) and 97–117 (TIGS…NLID). Residues Asp-126 and Asp-144 contribute to the active site. The chain crosses the membrane as a helical span at residues 135–155 (YSFPVFNLADCFITIGVIILI).

This sequence belongs to the peptidase A8 family.

The protein localises to the cell inner membrane. It carries out the reaction Release of signal peptides from bacterial membrane prolipoproteins. Hydrolyzes -Xaa-Yaa-Zaa-|-(S,diacylglyceryl)Cys-, in which Xaa is hydrophobic (preferably Leu), and Yaa (Ala or Ser) and Zaa (Gly or Ala) have small, neutral side chains.. It functions in the pathway protein modification; lipoprotein biosynthesis (signal peptide cleavage). Functionally, this protein specifically catalyzes the removal of signal peptides from prolipoproteins. The protein is Lipoprotein signal peptidase of Rickettsia felis (strain ATCC VR-1525 / URRWXCal2) (Rickettsia azadi).